Reading from the N-terminus, the 199-residue chain is Large ribosomal subunit protein bL25 (199 aa).

Belongs to the bacterial ribosomal protein bL25 family. CTC subfamily. In terms of assembly, part of the 50S ribosomal subunit; part of the 5S rRNA/L5/L18/L25 subcomplex. Contacts the 5S rRNA. Binds to the 5S rRNA independently of L5 and L18.

This is one of the proteins that binds to the 5S RNA in the ribosome where it forms part of the central protuberance. In Caldanaerobacter subterraneus subsp. tengcongensis (strain DSM 15242 / JCM 11007 / NBRC 100824 / MB4) (Thermoanaerobacter tengcongensis), this protein is Large ribosomal subunit protein bL25.